The following is a 461-amino-acid chain: Divalent metal cation transporter MntH (461 aa).

11 helical membrane-spanning segments follow: residues 56–76 (AMAF…PGNW), 89–109 (TLLA…SLCA), 132–152 (AMVL…AEVI), 160–180 (LIFG…VFLI), 193–213 (ALVI…LALA), 230–250 (IVTN…TVMP), 285–305 (IALM…AATF), 322–342 (LLAP…ALLC), 378–398 (AIAI…GTGQ), 399–419 (LLIL…FPLV), and 433–453 (SPLW…ALNV).

It belongs to the NRAMP family.

It localises to the cell inner membrane. Its function is as follows. H(+)-stimulated, divalent metal cation uptake system. The sequence is that of Divalent metal cation transporter MntH from Agrobacterium fabrum (strain C58 / ATCC 33970) (Agrobacterium tumefaciens (strain C58)).